We begin with the raw amino-acid sequence, 540 residues long: Glucose-6-phosphate isomerase (540 aa).

Glu351 acts as the Proton donor in catalysis. Catalysis depends on residues His382 and Lys506.

Belongs to the GPI family.

The protein resides in the cytoplasm. It carries out the reaction alpha-D-glucose 6-phosphate = beta-D-fructose 6-phosphate. It functions in the pathway carbohydrate biosynthesis; gluconeogenesis. Its pathway is carbohydrate degradation; glycolysis; D-glyceraldehyde 3-phosphate and glycerone phosphate from D-glucose: step 2/4. Catalyzes the reversible isomerization of glucose-6-phosphate to fructose-6-phosphate. The polypeptide is Glucose-6-phosphate isomerase (Corynebacterium glutamicum (strain R)).